The sequence spans 78 residues: Probable [Fe-S]-dependent transcriptional repressor (78 aa).

Iron-sulfur cluster contacts are provided by Cys-56, Cys-61, Cys-64, and Cys-70.

It belongs to the FeoC family.

May function as a transcriptional regulator that controls feoABC expression. This is Probable [Fe-S]-dependent transcriptional repressor from Salmonella agona (strain SL483).